We begin with the raw amino-acid sequence, 132 residues long: Antileukoproteinase (132 aa).

Residues 1–24 (MKFSGLFPFLLLALGTLALWAVEG) form the signal peptide. The WAP 1 domain maps to 28–76 (EALKAGACPPRKSAQCFGNEKPRCSSDWQCPHKKKCCLDTCGTECLDPV). 4 cysteine pairs are disulfide-bonded: Cys-35–Cys-64, Cys-43–Cys-68, Cys-51–Cys-63, and Cys-57–Cys-72. N-linked (GlcNAc...) asparagine glycosylation is present at Asn-77. The WAP 2 domain maps to 82-130 (VKKKPGTCPVIHGQCLMLKPLNHCETDDQCIGALKCCKAMCGKVCLSPV). Intrachain disulfides connect Cys-89/Cys-118, Cys-96/Cys-122, Cys-105/Cys-117, and Cys-111/Cys-126.

As to quaternary structure, interacts with GRN; interaction protects progranulin from proteolysis. As to expression, detected in bronchoalveolar fluid (at protein level). Detected in large and small intestine, trachea, skin, lung and tongue.

It localises to the secreted. Functionally, acid-stable proteinase inhibitor with strong affinities for trypsin, chymotrypsin, elastase, and cathepsin G. Modulates the inflammatory and immune responses after bacterial infection, and after infection by the intracellular parasite L.major. Down-regulates responses to bacterial lipopolysaccharide (LPS). Plays a role in regulating the activation of NF-kappa-B and inflammatory responses. Has antimicrobial activity against mycobacteria, but not against salmonella. Contributes to normal resistance against infection by M.tuberculosis. Required for normal resistance to infection by L.major. Required for normal wound healing, probably by preventing tissue damage by limiting protease activity. Together with ELANE, required for normal differentiation and proliferation of bone marrow myeloid cells. The protein is Antileukoproteinase (SLPI) of Ovis aries (Sheep).